A 391-amino-acid polypeptide reads, in one-letter code: Putative 12-oxophytodienoate reductase 6 (391 aa).

FMN is bound by residues 42-44, A75, and Q117; that span reads PMT. 189–192 contacts substrate; it reads HGAN. Y194 functions as the Proton donor in the catalytic mechanism. Position 241 (R241) interacts with FMN. Substrate is bound at residue R282. FMN contacts are provided by residues G312 and 333–334; that span reads GR. The segment at 372-391 is disordered; that stretch reads YPFLDEHHHDDDDDSNAPSA. Residues 382–391 are compositionally biased toward acidic residues; sequence DDDDSNAPSA.

Belongs to the NADH:flavin oxidoreductase/NADH oxidase family. The cofactor is FMN.

In terms of biological role, putative oxophytodienoate reductase that may be involved in the biosynthesis or metabolism of oxylipin signaling molecules. The protein is Putative 12-oxophytodienoate reductase 6 (OPR6) of Oryza sativa subsp. japonica (Rice).